A 159-amino-acid chain; its full sequence is Cyclic pyranopterin monophosphate synthase (159 aa).

Substrate contacts are provided by residues 75–77 (LCH) and 113–114 (ME). Asp128 is a catalytic residue.

This sequence belongs to the MoaC family. Homohexamer; trimer of dimers.

It carries out the reaction (8S)-3',8-cyclo-7,8-dihydroguanosine 5'-triphosphate = cyclic pyranopterin phosphate + diphosphate. The protein operates within cofactor biosynthesis; molybdopterin biosynthesis. Functionally, catalyzes the conversion of (8S)-3',8-cyclo-7,8-dihydroguanosine 5'-triphosphate to cyclic pyranopterin monophosphate (cPMP). This chain is Cyclic pyranopterin monophosphate synthase, found in Cupriavidus necator (strain ATCC 17699 / DSM 428 / KCTC 22496 / NCIMB 10442 / H16 / Stanier 337) (Ralstonia eutropha).